The following is a 160-amino-acid chain: Ribosomal RNA large subunit methyltransferase H (160 aa).

Residues Leu76 and Gly108 each contribute to the S-adenosyl-L-methionine site.

Belongs to the RNA methyltransferase RlmH family. As to quaternary structure, homodimer.

It localises to the cytoplasm. It catalyses the reaction pseudouridine(1915) in 23S rRNA + S-adenosyl-L-methionine = N(3)-methylpseudouridine(1915) in 23S rRNA + S-adenosyl-L-homocysteine + H(+). Its function is as follows. Specifically methylates the pseudouridine at position 1915 (m3Psi1915) in 23S rRNA. In Xanthobacter autotrophicus (strain ATCC BAA-1158 / Py2), this protein is Ribosomal RNA large subunit methyltransferase H.